The chain runs to 119 residues: Ribonuclease P protein component (119 aa).

It belongs to the RnpA family. In terms of assembly, consists of a catalytic RNA component (M1 or rnpB) and a protein subunit.

The catalysed reaction is Endonucleolytic cleavage of RNA, removing 5'-extranucleotides from tRNA precursor.. Its function is as follows. RNaseP catalyzes the removal of the 5'-leader sequence from pre-tRNA to produce the mature 5'-terminus. It can also cleave other RNA substrates such as 4.5S RNA. The protein component plays an auxiliary but essential role in vivo by binding to the 5'-leader sequence and broadening the substrate specificity of the ribozyme. The protein is Ribonuclease P protein component of Salmonella schwarzengrund (strain CVM19633).